Reading from the N-terminus, the 265-residue chain is Undecaprenyl-diphosphatase (265 aa).

The next 8 helical transmembrane spans lie at 1-21, 39-59, 86-106, 112-132, 140-160, 186-206, 219-239, and 244-264; these read MDIL…FLPI, QGLA…ILYF, WCII…GNFI, SVSV…FADA, LAQM…LAMI, FSFL…GLKL, VGVL…LSFI, and MLPF…LVWF.

This sequence belongs to the UppP family.

Its subcellular location is the cell inner membrane. It carries out the reaction di-trans,octa-cis-undecaprenyl diphosphate + H2O = di-trans,octa-cis-undecaprenyl phosphate + phosphate + H(+). In terms of biological role, catalyzes the dephosphorylation of undecaprenyl diphosphate (UPP). Confers resistance to bacitracin. The sequence is that of Undecaprenyl-diphosphatase from Saccharophagus degradans (strain 2-40 / ATCC 43961 / DSM 17024).